Here is a 203-residue protein sequence, read N- to C-terminus: Small ribosomal subunit protein uS4c (203 aa).

The disordered stretch occupies residues 17 to 39; the sequence is TLPGLTTKKSNKLNRPGKDGNTD. Positions 92–164 constitute an S4 RNA-binding domain; that stretch reads MRLDTLCFTL…IKNNQVREIP (73 aa).

The protein belongs to the universal ribosomal protein uS4 family. As to quaternary structure, part of the 30S ribosomal subunit. Contacts protein S5. The interaction surface between S4 and S5 is involved in control of translational fidelity.

The protein resides in the plastid. The protein localises to the chloroplast. Functionally, one of the primary rRNA binding proteins, it binds directly to 16S rRNA where it nucleates assembly of the body of the 30S subunit. In terms of biological role, with S5 and S12 plays an important role in translational accuracy. The protein is Small ribosomal subunit protein uS4c (rps4) of Phaeodactylum tricornutum (strain CCAP 1055/1).